We begin with the raw amino-acid sequence, 308 residues long: MAKPLKQQKIAVLLGGTSAEREVSLNSGNAVLTALRNQGFDAHPIDPKEYPVAMLKEQGFDRVFNILHGRGGEDGTIQGLLEQIGLPYTGCGVMASALTMDKMRTKMLWKAFGLPVADMEVVTRTSFSQLNPQVVVEKLGLPLMVKPSLEGSSVGLTKVNAIDDLKSAVEFALQYDETVLIEEWLSGDELTVPVLGNEVLPSIKIVPQGEFYDYEAKYIADNTQYFCPSGLTEEREQELRQLVKQAYDVVGCRGWSRIDVMLDGEGKFRLVEVNTNPGMTSHSLFPKSAATVGYSFEQLVVKILELSL.

The 200-residue stretch at 106–305 (KMLWKAFGLP…FEQLVVKILE (200 aa)) folds into the ATP-grasp domain. An ATP-binding site is contributed by 136–191 (VEKLGLPLMVKPSLEGSSVGLTKVNAIDDLKSAVEFALQYDETVLIEEWLSGDELT). Mg(2+) contacts are provided by Asp-259, Glu-272, and Asn-274.

This sequence belongs to the D-alanine--D-alanine ligase family. Mg(2+) serves as cofactor. Requires Mn(2+) as cofactor.

The protein localises to the cytoplasm. The enzyme catalyses 2 D-alanine + ATP = D-alanyl-D-alanine + ADP + phosphate + H(+). Its pathway is cell wall biogenesis; peptidoglycan biosynthesis. Functionally, cell wall formation. The chain is D-alanine--D-alanine ligase from Histophilus somni (strain 2336) (Haemophilus somnus).